The sequence spans 491 residues: Ketol-acid reductoisomerase (NADP(+)) (491 aa).

Residues 15–208 (AQLGKCRFMG…GGHRAGVLES (194 aa)) enclose the KARI N-terminal Rossmann domain. NADP(+) contacts are provided by residues 45–48 (CGAQ), Arg-68, Arg-76, Ser-78, and 108–110 (DKQ). His-132 is a catalytic residue. Gly-158 lines the NADP(+) pocket. KARI C-terminal knotted domains lie at 209-344 (SFVA…TAPQ) and 345-484 (FEGK…MTDM). Positions 217, 221, 389, and 393 each coordinate Mg(2+). Residue Ser-414 coordinates substrate.

Belongs to the ketol-acid reductoisomerase family. Requires Mg(2+) as cofactor.

The catalysed reaction is (2R)-2,3-dihydroxy-3-methylbutanoate + NADP(+) = (2S)-2-acetolactate + NADPH + H(+). It catalyses the reaction (2R,3R)-2,3-dihydroxy-3-methylpentanoate + NADP(+) = (S)-2-ethyl-2-hydroxy-3-oxobutanoate + NADPH + H(+). It participates in amino-acid biosynthesis; L-isoleucine biosynthesis; L-isoleucine from 2-oxobutanoate: step 2/4. It functions in the pathway amino-acid biosynthesis; L-valine biosynthesis; L-valine from pyruvate: step 2/4. In terms of biological role, involved in the biosynthesis of branched-chain amino acids (BCAA). Catalyzes an alkyl-migration followed by a ketol-acid reduction of (S)-2-acetolactate (S2AL) to yield (R)-2,3-dihydroxy-isovalerate. In the isomerase reaction, S2AL is rearranged via a Mg-dependent methyl migration to produce 3-hydroxy-3-methyl-2-ketobutyrate (HMKB). In the reductase reaction, this 2-ketoacid undergoes a metal-dependent reduction by NADPH to yield (R)-2,3-dihydroxy-isovalerate. The polypeptide is Ketol-acid reductoisomerase (NADP(+)) (Salmonella dublin (strain CT_02021853)).